The chain runs to 492 residues: GTPase-activating protein MSB4 (492 aa).

Residues 147–367 form the Rab-GAP TBC domain; it reads GIPAEWRGNA…RIWDCLFYEE (221 aa).

It localises to the cytoplasm. The protein localises to the bud. The protein resides in the bud neck. Its function is as follows. Regulates exocytosis by functioning as a GAP for SEC4. Also required for efficient polarization of the actin patches. The sequence is that of GTPase-activating protein MSB4 (MSB4) from Saccharomyces cerevisiae (strain ATCC 204508 / S288c) (Baker's yeast).